Here is a 412-residue protein sequence, read N- to C-terminus: Alpha-1-antiproteinase (412 aa).

The first 24 residues, 1 to 24 (MPSSISWGLLLLAGLCCLAPGSLA), serve as a signal peptide directing secretion. Serine 33 bears the Phosphoserine mark. Residues asparagine 65, asparagine 102, asparagine 165, and asparagine 266 are each glycosylated (N-linked (GlcNAc...) asparagine). The tract at residues 368-387 (GVTVLEAIPMSLPPDVRFDR) is RCL. Phosphoserine is present on serine 378.

It belongs to the serpin family. In terms of assembly, interacts with CELA2A. Interacts with ERGIC3 and LMAN1/ERGIC53. Interacts with PRSS1/Trypsin. In terms of tissue distribution, plasma.

Its subcellular location is the secreted. Inhibitor of serine proteases. The sequence is that of Alpha-1-antiproteinase from Callosciurus caniceps (Gray-bellied squirrel).